We begin with the raw amino-acid sequence, 555 residues long: Steroid-22-oyl-CoA synthetase (555 aa).

It belongs to the ATP-dependent AMP-binding enzyme family.

It carries out the reaction 3-oxochol-4-en-22-oate + ATP + CoA = 3-oxochol-4-en-22-oyl-CoA + AMP + diphosphate. It catalyses the reaction 3-hydroxy-9-oxo-9,10-seco-chola-1,3,5-trien-22-oate + ATP + CoA = 3-hydroxy-9-oxo-9,10-seco-chola-1,3,5-trien-22-oyl-CoA + AMP + diphosphate. The protein operates within steroid metabolism. Functionally, involved in cholate catabolism. Catalyzes the ATP-dependent formation of CoA thioesters of steroids with isopropanoyl side chains, likely occurring as degradation intermediates. Can use 4-BNC, HSBNC and HIDP as substrate. This Rhodococcus jostii (strain RHA1) protein is Steroid-22-oyl-CoA synthetase.